The primary structure comprises 77 residues: U8-lycotoxin-Ls1f (77 aa).

An N-terminal signal peptide occupies residues 1-20 (MKLIIFTGLVLFAIVSLIEV). A propeptide spanning residues 21–26 (QADNER) is cleaved from the precursor.

The protein belongs to the neurotoxin 19 (CSTX) family. 08 (U8-Lctx) subfamily. In terms of processing, contains 4 disulfide bonds. In terms of tissue distribution, expressed by the venom gland.

It is found in the secreted. The sequence is that of U8-lycotoxin-Ls1f from Lycosa singoriensis (Wolf spider).